A 201-amino-acid polypeptide reads, in one-letter code: Transcription factor MYB82 (201 aa).

HTH myb-type domains follow at residues 9–61 (KSYV…KNYL) and 62–116 (RPNI…NKKP). 2 consecutive DNA-binding regions (H-T-H motif) follow at residues 37–61 (WADI…KNYL) and 89–112 (WSLI…NTHL). The tract at residues 112–133 (LNKKPNSRRQNAPESIVGATPF) is disordered.

As to quaternary structure, homodimer and heterodimer with GL1. Part of the WD40-bHLH-MYB complex. Interacts with BHLH012/MYC1 and BHLH042/TT8. Interacts (via N-terminus) with GL1 and GL3. Mainly expressed in the trichomes of new leaves.

It is found in the nucleus. Its function is as follows. Transcription activation factor positively regulating trichomes development. Has a function nearly equivalent to that of GL1 and can complement gl1 mutants. The protein is Transcription factor MYB82 (MYB82) of Arabidopsis thaliana (Mouse-ear cress).